We begin with the raw amino-acid sequence, 351 residues long: N-acetyl-gamma-glutamyl-phosphate reductase (351 aa).

The active site involves Cys154.

Belongs to the NAGSA dehydrogenase family. Type 1 subfamily.

Its subcellular location is the cytoplasm. It catalyses the reaction N-acetyl-L-glutamate 5-semialdehyde + phosphate + NADP(+) = N-acetyl-L-glutamyl 5-phosphate + NADPH + H(+). Its pathway is amino-acid biosynthesis; L-arginine biosynthesis; N(2)-acetyl-L-ornithine from L-glutamate: step 3/4. Functionally, catalyzes the NADPH-dependent reduction of N-acetyl-5-glutamyl phosphate to yield N-acetyl-L-glutamate 5-semialdehyde. The polypeptide is N-acetyl-gamma-glutamyl-phosphate reductase (Prochlorococcus marinus (strain MIT 9515)).